Here is a 670-residue protein sequence, read N- to C-terminus: Sodium/potassium/calcium exchanger 2 (670 aa).

At 1–38 (MDLHQSATVRLLQEWCSHESPSGCRRHYNTRKKLKLIR) the chain is on the cytoplasmic side. The helical transmembrane segment at 39 to 59 (VIGLVMGLVAVSTVPFSISAF) threads the bilayer. The Extracellular portion of the chain corresponds to 60-133 (TETYSQNNRG…DVFSLEERRK (74 aa)). Disordered regions lie at residues 67-86 (NRGE…HRQR) and 91-122 (LNDK…GDYP). A compositionally biased stretch (basic and acidic residues) spans 106–122 (QEDRSENGTDHAQGDYP). N-linked (GlcNAc...) asparagine glycosylation occurs at N112. A helical transmembrane segment spans residues 134–154 (GAIILHVIGMIYMFIALAIVC). Residues 155-179 (DEFFVPSLTVITEKLGISDDVAGAT) are Cytoplasmic-facing. One copy of the Alpha-1 repeat lies at 175–215 (VAGATFMAAGGSAPELFTSLIGVFIAHSNVGIGTIVGSAVF). The chain crosses the membrane as a helical span at residues 180–200 (FMAAGGSAPELFTSLIGVFIA). The Extracellular portion of the chain corresponds to 201–205 (HSNVG). A helical transmembrane segment spans residues 206–226 (IGTIVGSAVFNILFVIGMCAL). At 227-244 (FSREILNLTWWPLFRDVS) the chain is on the cytoplasmic side. A helical transmembrane segment spans residues 245–265 (FYIVDLIMLIIFFLDNVIMWW). Residue E266 is a topological domain, extracellular. Residues 267 to 287 (SLLLLTAYFAYVVFMKFNVQV) form a helical membrane-spanning segment. Residues 288-506 (ERWVKQMINR…PDVRKPASKK (219 aa)) are Cytoplasmic-facing. The segment at 312–335 (ASTAGDKEEPTLPNKPRLQRGGSS) is disordered. S337 and S341 each carry phosphoserine. Disordered stretches follow at residues 394–414 (KCQV…DYAA) and 450–471 (AADA…LSLS). Residues 507 to 527 (FFPITFFGSITWIAVFSYLMV) form a helical membrane-spanning segment. Topologically, residues 528 to 542 (WWAHQVGETIGISEE) are extracellular. A helical transmembrane segment spans residues 543 to 563 (IMGLTILAAGTSIPDLITSVI). An Alpha-2 repeat occupies 550–581 (AAGTSIPDLITSVIVARKGLGDMAVSSSVGSN). Residues 564–578 (VARKGLGDMAVSSSV) are Cytoplasmic-facing. Residues 579–599 (GSNIFDITVGLPLPWLLYTII) form a helical membrane-spanning segment. Topologically, residues 600–611 (HRFKPVTVSSNG) are extracellular. A helical transmembrane segment spans residues 612–632 (LFCAIVLLFIMLIFVILSIAL). Residues 633–639 (CKWRMNK) are Cytoplasmic-facing. The chain crosses the membrane as a helical span at residues 640–660 (ILGFIMFGLYFAFLVVSVLLE). Over 661 to 670 (DKVLECPVSI) the chain is Extracellular.

The protein belongs to the Ca(2+):cation antiporter (CaCA) (TC 2.A.19) family. SLC24A subfamily. As to expression, expressed abundantly in all regions of the brain and weakly in the eye, large intestine and adrenal tissue.

It localises to the cell membrane. It catalyses the reaction Ca(2+)(out) + K(+)(out) + 4 Na(+)(in) = Ca(2+)(in) + K(+)(in) + 4 Na(+)(out). Calcium, potassium:sodium antiporter that transports 1 Ca(2+) and 1 K(+) in exchange for 4 Na(+). Required for learming and memory by regulating neuronal Ca(2+), which is essential for the development of synaptic plasticity. The sequence is that of Sodium/potassium/calcium exchanger 2 (Slc24a2) from Rattus norvegicus (Rat).